Here is a 435-residue protein sequence, read N- to C-terminus: ATP-dependent Clp protease ATP-binding subunit ClpX 3 (435 aa).

The region spanning 1–53 is the ClpX-type ZB domain; that stretch reads MSSDPPAKTQHCSFCGIEQGRDTPLIAGIEGQICEACVRLAEQVVANWGRKRS. Zn(2+) is bound by residues C12, C15, C34, and C37. Position 125–132 (125–132) interacts with ATP; sequence PTGTGKTL.

The protein belongs to the ClpX chaperone family. In terms of assembly, component of the ClpX-ClpP complex. Forms a hexameric ring that, in the presence of ATP, binds to fourteen ClpP subunits assembled into a disk-like structure with a central cavity, resembling the structure of eukaryotic proteasomes.

Functionally, ATP-dependent specificity component of the Clp protease. It directs the protease to specific substrates. Can perform chaperone functions in the absence of ClpP. This chain is ATP-dependent Clp protease ATP-binding subunit ClpX 3, found in Methylococcus capsulatus (strain ATCC 33009 / NCIMB 11132 / Bath).